The following is a 538-amino-acid chain: Thiamine transport system permease protein ThiP (538 aa).

A run of 12 helical transmembrane segments spans residues valine 19–leucine 39, leucine 57–leucine 77, leucine 97–tyrosine 117, leucine 141–leucine 161, phenylalanine 202–glycine 222, leucine 242–leucine 262, isoleucine 293–serine 313, leucine 337–leucine 357, alanine 376–leucine 396, leucine 406–leucine 426, tyrosine 466–glycine 486, and alanine 509–threonine 529. An ABC transmembrane type-1 1 domain is found at isoleucine 58–threonine 263. The ABC transmembrane type-1 2 domain maps to leucine 333–histidine 528.

This sequence belongs to the binding-protein-dependent transport system permease family. CysTW subfamily. In terms of assembly, the complex is composed of two ATP-binding proteins (ThiQ), two transmembrane proteins (ThiP) and a solute-binding protein (ThiB).

It localises to the cell inner membrane. Part of the ABC transporter complex ThiBPQ involved in thiamine import. Probably responsible for the translocation of the substrate across the membrane. This is Thiamine transport system permease protein ThiP (thiP) from Haemophilus influenzae (strain ATCC 51907 / DSM 11121 / KW20 / Rd).